Reading from the N-terminus, the 286-residue chain is Aminoglycoside N(3)-acetyltransferase III (286 aa).

Belongs to the antibiotic N-acetyltransferase family.

The enzyme catalyses a 2-deoxystreptamine antibiotic + acetyl-CoA = an N(3)-acetyl-2-deoxystreptamine antibiotic + CoA + H(+). Resistance to antibiotics containing the 2-deoxy-streptamine ring including gentamicin, kanamycin, tobramycin, neomycin and apramycin. This is Aminoglycoside N(3)-acetyltransferase III (aacC3) from Salmonella sp.